We begin with the raw amino-acid sequence, 146 residues long: DNA-binding protein Rv2175c (146 aa).

Residues 1-27 form a disordered region; that stretch reads MPGRAPGSTLARVGSIPAGDDVLDPDE. Position 9 is a phosphothreonine (Thr9).

In terms of assembly, monomer in solution. May form homodimers. Interacts with phosphorylated PknL. In terms of processing, phosphorylated by PknL. Phosphorylation negatively regulates DNA-binding activity.

Functionally, binds DNA at low salt concentrations. This Mycobacterium tuberculosis (strain ATCC 25618 / H37Rv) protein is DNA-binding protein Rv2175c.